A 223-amino-acid chain; its full sequence is 7-cyano-7-deazaguanine synthase (223 aa).

Position 15 to 25 (15 to 25 (FSGGQDSTTCL)) interacts with ATP. Residues C191, C200, C203, and C206 each coordinate Zn(2+).

Belongs to the QueC family. In terms of assembly, homodimer. The cofactor is Zn(2+).

It catalyses the reaction 7-carboxy-7-deazaguanine + NH4(+) + ATP = 7-cyano-7-deazaguanine + ADP + phosphate + H2O + H(+). It participates in purine metabolism; 7-cyano-7-deazaguanine biosynthesis. Its function is as follows. Catalyzes the ATP-dependent conversion of 7-carboxy-7-deazaguanine (CDG) to 7-cyano-7-deazaguanine (preQ(0)). This chain is 7-cyano-7-deazaguanine synthase, found in Staphylococcus saprophyticus subsp. saprophyticus (strain ATCC 15305 / DSM 20229 / NCIMB 8711 / NCTC 7292 / S-41).